The chain runs to 477 residues: Ribulose bisphosphate carboxylase large chain (477 aa).

Positions methionine 1–serine 2 are excised as a propeptide. The residue at position 3 (proline 3) is an N-acetylproline. An N6,N6,N6-trimethyllysine modification is found at lysine 14. A substrate-binding site is contributed by threonine 173. Lysine 175 (proton acceptor) is an active-site residue. Lysine 177 contacts substrate. 3 residues coordinate Mg(2+): lysine 201, aspartate 203, and glutamate 204. Lysine 201 bears the N6-carboxylysine mark. The active-site Proton acceptor is histidine 294. Residues arginine 295, histidine 327, and serine 379 each contribute to the substrate site.

This sequence belongs to the RuBisCO large chain family. Type I subfamily. In terms of assembly, heterohexadecamer of 8 large chains and 8 small chains; disulfide-linked. The disulfide link is formed within the large subunit homodimers. The cofactor is Mg(2+). The disulfide bond which can form in the large chain dimeric partners within the hexadecamer appears to be associated with oxidative stress and protein turnover.

The protein localises to the plastid. It localises to the chloroplast. The enzyme catalyses 2 (2R)-3-phosphoglycerate + 2 H(+) = D-ribulose 1,5-bisphosphate + CO2 + H2O. It carries out the reaction D-ribulose 1,5-bisphosphate + O2 = 2-phosphoglycolate + (2R)-3-phosphoglycerate + 2 H(+). RuBisCO catalyzes two reactions: the carboxylation of D-ribulose 1,5-bisphosphate, the primary event in carbon dioxide fixation, as well as the oxidative fragmentation of the pentose substrate in the photorespiration process. Both reactions occur simultaneously and in competition at the same active site. This Gerbera jamesonii (Transvaal daisy) protein is Ribulose bisphosphate carboxylase large chain.